The following is a 508-amino-acid chain: DNA polymerase II small subunit (508 aa).

Positions Ala66–Pro80 are enriched in low complexity. The segment at Ala66–Thr122 is disordered. Residues His86–Pro95 are compositionally biased toward polar residues.

The protein belongs to the DNA polymerase delta/II small subunit family. Heterodimer of a large subunit and a small subunit.

The catalysed reaction is DNA(n) + a 2'-deoxyribonucleoside 5'-triphosphate = DNA(n+1) + diphosphate. The enzyme catalyses Exonucleolytic cleavage in the 3'- to 5'-direction to yield nucleoside 5'-phosphates.. In terms of biological role, possesses two activities: a DNA synthesis (polymerase) and an exonucleolytic activity that degrades single-stranded DNA in the 3' to 5' direction. Has a template-primer preference which is characteristic of a replicative DNA polymerase. This chain is DNA polymerase II small subunit, found in Halobacterium salinarum (strain ATCC 29341 / DSM 671 / R1).